The following is a 3198-amino-acid chain: Helicase domino (3198 aa).

Over residues 1-12 (MNEGNSAGGGHE) the composition is skewed to gly residues. Disordered stretches follow at residues 1–27 (MNEG…RVTP), 93–112 (LPQQ…APAH), and 119–148 (SSTI…AASI). Over residues 134 to 143 (QRLDDNEDRT) the composition is skewed to basic and acidic residues. Residues 187–212 (KKRILQQKLQILRNLKERHLENVSEY) adopt a coiled-coil conformation. Disordered regions lie at residues 256–350 (TSAA…SATS) and 391–474 (GGTP…TPNS). Polar residues-rich tracts occupy residues 264–281 (QNQK…SSLV) and 297–329 (NISN…TESN). Low complexity predominate over residues 330–350 (SSTTVPGTATSGAATSTSATS). A compositionally biased stretch (polar residues) spans 391-404 (GGTPLLPCNTSAGS). The segment covering 452–464 (PGTPTSGSLLSPA) has biased composition (low complexity). Residues 507 to 579 (LPKLQEPSRP…QELQLKRVAS (73 aa)) enclose the HSA domain. The tract at residues 635 to 848 (NKSVADTPSL…DMEEQDEQED (214 aa)) is disordered. The segment covering 638-650 (VADTPSLNSSRLT) has biased composition (polar residues). Over residues 652–664 (PKRESDDDFRPES) the composition is skewed to basic and acidic residues. Phosphoserine occurs at positions 656, 664, and 666. Residues 666–696 (SEDDEETIAKAEEDAADVKEEVTALAKESEM) are a coiled coil. Basic and acidic residues-rich tracts occupy residues 672 to 695 (TIAK…KESE) and 711 to 721 (ENRDKLMKEEQ). T729 carries the post-translational modification Phosphothreonine. Phosphoserine occurs at positions 733, 736, and 744. Residues 741–784 (KEASDDDENTISKQEEAEQEIDHKKEIDELEADNDLSVEQLLAK) adopt a coiled-coil conformation. The segment covering 753-767 (KQEEAEQEIDHKKEI) has biased composition (basic and acidic residues). The span at 805–831 (LDSDDDSTAVDSTEESEDAATEDEEDL) shows a compositional bias: acidic residues. T838 bears the Phosphothreonine mark. One can recognise a Helicase ATP-binding domain in the interval 926-1091 (VTMNERKLNG…WSLMHFLMPY (166 aa)). 939-946 (DEMGLGKT) provides a ligand contact to ATP. The interval 1471-1492 (VQKQSIANGKTEPEEETEAEDP) is disordered. Residues 1662–1812 (TMDRLLRQLK…DMAIEGGNFT (151 aa)) enclose the Helicase C-terminal domain. Positions 1828-1856 (EQSEQDESSQEKSENKDRIVATTTLSDTP) are disordered. A compositionally biased stretch (basic and acidic residues) spans 1836–1846 (SQEKSENKDRI). Residues 1951–1996 (AAWTAEQLRAAEAELEAQKREWEANRLAAMHKEEELLKQETEAEEM) adopt a coiled-coil conformation. The tract at residues 2061-2100 (KEHKRSRTDAGYDGSRRPNKMRREDNYVPPRSLFDRPTPQ) is disordered. Positions 2067 to 2086 (RTDAGYDGSRRPNKMRREDN) are enriched in basic and acidic residues. Residues 2136–2205 (TEPEAMAEWC…QCRWRYETHI (70 aa)) enclose the Myb-like domain. The segment at 2318–2362 (IREKQRGQQMSQPPVGVGVVQQMQQQSQQQQQPAPPPLPQQQQPQ) is disordered. The span at 2325 to 2349 (QQMSQPPVGVGVVQQMQQQSQQQQQ) shows a compositional bias: low complexity.

Belongs to the SNF2/RAD54 helicase family. SWR1 subfamily. As to quaternary structure, component of the Tip60 chromatin-remodeling complex which contains Domino, Tip60, Tra1, Brd8, E(Pc), DMAP1, Pontin, Reptin, Ing3, Act87E, BAP55, Mrg15, MrgBP, Gas41 and YL-1. As to expression, isoform B is present at high levels in ovary, in follicle cells, nurse cells and oocyte. Isoform B is also present in germline and somatic stem cells from the germarium. Isoform A is undetectable in adult ovary (at protein level).

The protein resides in the nucleus. Functionally, mediates the ATP-dependent exchange of unmodified histone H2AV for its phosphorylated and acetylated form H2AVK5acS138ph, leading to transcriptional regulation of selected genes by chromatin remodeling. Involved in Notch signaling. Represses E2F target genes. Required for somatic stem cell self-renewal but not for germline stem cell self-renewal. Involved in oogenesis. The sequence is that of Helicase domino (dom) from Drosophila melanogaster (Fruit fly).